Reading from the N-terminus, the 244-residue chain is tRNA (guanine-N(1)-)-methyltransferase (244 aa).

Residues glycine 113 and 132 to 137 contribute to the S-adenosyl-L-methionine site; that span reads IGDYVL.

The protein belongs to the RNA methyltransferase TrmD family. Homodimer.

It is found in the cytoplasm. The enzyme catalyses guanosine(37) in tRNA + S-adenosyl-L-methionine = N(1)-methylguanosine(37) in tRNA + S-adenosyl-L-homocysteine + H(+). Functionally, specifically methylates guanosine-37 in various tRNAs. This chain is tRNA (guanine-N(1)-)-methyltransferase, found in Shouchella clausii (strain KSM-K16) (Alkalihalobacillus clausii).